Consider the following 370-residue polypeptide: Phospho-N-acetylmuramoyl-pentapeptide-transferase (370 aa).

Transmembrane regions (helical) follow at residues Pro21–Ile41, Leu46–Ile66, Pro92–Leu112, Phe117–Ile137, Leu151–Ile171, Ile181–Phe201, Asp217–Ile237, Asn243–Phe263, Val270–Leu290, Leu298–Phe318, and Thr349–Leu369.

Belongs to the glycosyltransferase 4 family. MraY subfamily. Mg(2+) is required as a cofactor.

It localises to the cell inner membrane. The catalysed reaction is UDP-N-acetyl-alpha-D-muramoyl-L-alanyl-gamma-D-glutamyl-meso-2,6-diaminopimeloyl-D-alanyl-D-alanine + di-trans,octa-cis-undecaprenyl phosphate = di-trans,octa-cis-undecaprenyl diphospho-N-acetyl-alpha-D-muramoyl-L-alanyl-D-glutamyl-meso-2,6-diaminopimeloyl-D-alanyl-D-alanine + UMP. Its pathway is cell wall biogenesis; peptidoglycan biosynthesis. Catalyzes the initial step of the lipid cycle reactions in the biosynthesis of the cell wall peptidoglycan: transfers peptidoglycan precursor phospho-MurNAc-pentapeptide from UDP-MurNAc-pentapeptide onto the lipid carrier undecaprenyl phosphate, yielding undecaprenyl-pyrophosphoryl-MurNAc-pentapeptide, known as lipid I. This is Phospho-N-acetylmuramoyl-pentapeptide-transferase from Prochlorococcus marinus (strain SARG / CCMP1375 / SS120).